Reading from the N-terminus, the 274-residue chain is Prothoracicostatic peptide (274 aa).

A signal peptide spans Met1–Ala19. The propeptide occupies Ala20–Arg67. Trp76 bears the Tryptophan amide mark. Positions Gly77–Arg91 are excised as a propeptide. Trp100 bears the Tryptophan amide mark. The propeptide occupies Gly101 to Arg136. Residue Trp145 is modified to Tryptophan amide. Residues Gly146 to Arg148 constitute a propeptide that is removed on maturation. Trp157 is modified (tryptophan amide). The propeptide occupies Gly158–Arg172. The residue at position 181 (Trp181) is a Tryptophan amide. The propeptide occupies Gly182–Ala274.

The protein resides in the secreted. Its function is as follows. Inhibits ecdysteroid biosynthesis in the prothoracic gland of fifth instar larvae, with maximum inhibition during the spinning stage. When administered to day 8 fifth instar larvae it produces a significant delay in the commencement spinning behavior. This Bombyx mori (Silk moth) protein is Prothoracicostatic peptide.